The chain runs to 1333 residues: DNA-directed RNA polymerase subunit beta' (1333 aa).

Residues Cys60, Cys62, Cys75, and Cys78 each contribute to the Zn(2+) site. Mg(2+) is bound by residues Asp535, Asp537, and Asp539. Residues Cys901, Cys983, Cys990, and Cys993 each coordinate Zn(2+).

It belongs to the RNA polymerase beta' chain family. In terms of assembly, the RNAP catalytic core consists of 2 alpha, 1 beta, 1 beta' and 1 omega subunit. When a sigma factor is associated with the core the holoenzyme is formed, which can initiate transcription. Mg(2+) is required as a cofactor. The cofactor is Zn(2+).

It catalyses the reaction RNA(n) + a ribonucleoside 5'-triphosphate = RNA(n+1) + diphosphate. DNA-dependent RNA polymerase catalyzes the transcription of DNA into RNA using the four ribonucleoside triphosphates as substrates. This is DNA-directed RNA polymerase subunit beta' from Corynebacterium glutamicum (strain ATCC 13032 / DSM 20300 / JCM 1318 / BCRC 11384 / CCUG 27702 / LMG 3730 / NBRC 12168 / NCIMB 10025 / NRRL B-2784 / 534).